The sequence spans 369 residues: Molybdenum import ATP-binding protein ModC (369 aa).

In terms of domain architecture, ABC transporter spans 7–243; the sequence is PGQAGIHARF…LDLPMAMTDD (237 aa). ATP is bound at residue 41–48; sequence GQSGSGKT. Residues 304 to 369 enclose the Mop domain; the sequence is EGSILNVLAV…AQIKAVSLLA (66 aa).

This sequence belongs to the ABC transporter superfamily. Molybdate importer (TC 3.A.1.8) family. As to quaternary structure, the complex is composed of two ATP-binding proteins (ModC), two transmembrane proteins (ModB) and a solute-binding protein (ModA).

The protein resides in the cell inner membrane. It carries out the reaction molybdate(out) + ATP + H2O = molybdate(in) + ADP + phosphate + H(+). Part of the ABC transporter complex ModABC involved in molybdenum import. Responsible for energy coupling to the transport system. This is Molybdenum import ATP-binding protein ModC from Bordetella pertussis (strain Tohama I / ATCC BAA-589 / NCTC 13251).